The following is a 277-amino-acid chain: Putative glucose-6-phosphate/phosphate-translocator-like protein 1 (277 aa).

Transmembrane regions (helical) follow at residues 8-28 (VLPS…WWAL), 46-66 (LWLT…VSWV), 124-143 (MIGF…RNIF), 153-173 (VSVM…VTPF), and 230-250 (PLKH…FIYS).

It belongs to the TPT transporter family. GPT (TC 2.A.7.9) subfamily.

The protein localises to the membrane. The polypeptide is Putative glucose-6-phosphate/phosphate-translocator-like protein 1 (Arabidopsis thaliana (Mouse-ear cress)).